Here is a 462-residue protein sequence, read N- to C-terminus: Proteases secretion protein PrtF (462 aa).

The signal sequence occupies residues 1–23 (MRRKAVLLTVVLSLSGGSAQAMG).

It belongs to the outer membrane factor (OMF) (TC 1.B.17) family.

Its subcellular location is the cell outer membrane. In terms of biological role, involved in the secretion of proteases A, B, C and G. In Dickeya chrysanthemi (Pectobacterium chrysanthemi), this protein is Proteases secretion protein PrtF (prtF).